A 357-amino-acid chain; its full sequence is MNSDISNISLDATPRLTSLSHGGGCGCKIAPGVLSELLAKSNLPKQFFPDLLVGTETADDAAVYKINDEQAIVATTDFFMPIVDDPYDFGRIAATNALSDIYAMGGTPLMALAIVGMPINVLPHDVIAKILEGGESVCRDAGIPLAGGHSIDSVEPIYGLVGIGIVNPKQMKRNADAKDGDVLILGKPLGVGILSAALKKNLLDDAGYRAMVDATTKLNRPGTELAKLDGVHALTDVTGFGLLGHGLELARGAQLSARIDSAKLPMLPGVQALAEQGIFTGASGRNWASYGEHVELASSLTDAQKALLTDPQTSGGLLVSCTQDVVHQVLQVFADSGFAEAAVIGRMEAGAPKVFVG.

Residue C25 is part of the active site. ATP contacts are provided by residues K28 and 57–59; that span reads TAD. Position 60 (D60) interacts with Mg(2+). ATP-binding positions include D77, D100, and 148 to 150; that span reads GHS. Residue D100 participates in Mg(2+) binding. Residue D236 participates in Mg(2+) binding.

It belongs to the selenophosphate synthase 1 family. Class I subfamily. In terms of assembly, homodimer. It depends on Mg(2+) as a cofactor.

It carries out the reaction hydrogenselenide + ATP + H2O = selenophosphate + AMP + phosphate + 2 H(+). Synthesizes selenophosphate from selenide and ATP. This chain is Selenide, water dikinase, found in Pseudomonas straminea.